Here is a 153-residue protein sequence, read N- to C-terminus: General odorant-binding protein lush (153 aa).

The N-terminal stretch at 1–29 (MKHWKRRSSAVFAIVLQVLVLLLPDPAVA) is a signal peptide. Cystine bridges form between Cys46–Cys79, Cys75–Cys132, and Cys121–Cys141. The 1-propanol site is built by Ser81 and Thr86. The butan-1-ol site is built by Ser81 and Thr86. Ethanol is bound by residues Ser81 and Thr86.

Belongs to the PBP/GOBP family. As to expression, specifically expressed in chemosensory system in both males and females. Expressed in a subset of trichoid chemosensory sensilla located on the ventral-lateral surface of the third antennal segment. Secreted from non-neuronal support cells into the sensillum lymph that bathes the olfactory neurons within these sensilla.

It is found in the secreted. Its function is as follows. Odorant-binding protein required for olfactory behavior and for activity of pheromone-sensitive neurons. Binds to alcohols and mediates avoidance behavior to high concentrations of alcohols, the alcohol-binding possibly resulting in activation of receptors on T2B neurons, the activation of these receptors inhibiting these neurons. Acts in concert with Snmp and lush to capture cVA molecules on the surface of Or67d expressing olfactory dendrites and facilitate their transfer to the odorant-receptor Orco complex. Required for cVA response, probably by binding to VA. May act by serving as an adapter that bridges the presence of gaseous pheromone molecules, cVA, to activation of specific neuronal receptors expressed on T1 olfactory neurons, possibly via a specific conformational change induced by cVA that in turn activates T1 receptors. T1 neurons are excited by the pheromone VA, while T2 neurons are inhibited by alcohols. Also binds to phthalates. The chain is General odorant-binding protein lush (lush) from Drosophila melanogaster (Fruit fly).